Reading from the N-terminus, the 264-residue chain is Type III pantothenate kinase 2 (264 aa).

6 to 13 (DVGNTFTV) contributes to the ATP binding site. Residues Tyr-100 and 107 to 110 (GADR) each bind substrate. The Proton acceptor role is filled by Asp-109. Asp-129 lines the K(+) pocket. Position 132 (Thr-132) interacts with ATP. Thr-184 contributes to the substrate binding site.

This sequence belongs to the type III pantothenate kinase family. Homodimer. NH4(+) serves as cofactor. K(+) is required as a cofactor.

It is found in the cytoplasm. The enzyme catalyses (R)-pantothenate + ATP = (R)-4'-phosphopantothenate + ADP + H(+). Its pathway is cofactor biosynthesis; coenzyme A biosynthesis; CoA from (R)-pantothenate: step 1/5. Functionally, catalyzes the phosphorylation of pantothenate (Pan), the first step in CoA biosynthesis. In Symbiobacterium thermophilum (strain DSM 24528 / JCM 14929 / IAM 14863 / T), this protein is Type III pantothenate kinase 2.